Reading from the N-terminus, the 75-residue chain is Putative snRNP Sm-like protein (75 aa).

Positions 4–75 (RPLDVIHRSL…NVLAISPTEE (72 aa)) constitute a Sm domain.

Belongs to the snRNP Sm proteins family.

This chain is Putative snRNP Sm-like protein, found in Pyrococcus abyssi (strain GE5 / Orsay).